The chain runs to 226 residues: V-type proton ATPase subunit E (226 aa).

The protein belongs to the V-ATPase E subunit family. V-ATPase is a heteromultimeric enzyme made up of two complexes: the ATP-hydrolytic V1 complex and the proton translocation V0 complex. The V1 complex consists of three catalytic AB heterodimers that form a heterohexamer, three peripheral stalks each consisting of EG heterodimers, one central rotor including subunits D and F, and the regulatory subunits C and H. The proton translocation complex V0 consists of the proton transport subunit a, a ring of proteolipid subunits c9c'', rotary subunit d, subunits e and f, and the accessory subunits VhaAC45 and ATP6AP2.

In terms of biological role, subunit of the V1 complex of vacuolar(H+)-ATPase (V-ATPase), a multisubunit enzyme composed of a peripheral complex (V1) that hydrolyzes ATP and a membrane integral complex (V0) that translocates protons. V-ATPase is responsible for acidifying and maintaining the pH of intracellular compartments and in some cell types, is targeted to the plasma membrane, where it is responsible for acidifying the extracellular environment. This is V-type proton ATPase subunit E (Vha26) from Drosophila melanogaster (Fruit fly).